A 196-amino-acid chain; its full sequence is ECF RNA polymerase sigma factor SigM (196 aa).

Positions Leu39 to Lys105 are sigma-70 factor domain-2. The Interaction with polymerase core subunit RpoC motif lies at Asp63–Gln66. The interval Ala130–Leu181 is sigma-70 factor domain-4. Residues Ile156–Ala175 constitute a DNA-binding region (H-T-H motif).

This sequence belongs to the sigma-70 factor family. ECF subfamily. In terms of assembly, interacts transiently with the RNA polymerase catalytic core formed by RpoA, RpoB, RpoC and RpoZ (2 alpha, 1 beta, 1 beta' and 1 omega subunit) to form the RNA polymerase holoenzyme that can initiate transcription. Interacts (via sigma-70 factor domain 4) with anti-sigma-M factor RsmA.

In terms of biological role, sigma factors are initiation factors that promote the attachment of RNA polymerase to specific initiation sites and are then released. Extracytoplasmic function (ECF) sigma factors are held in an inactive form by an anti-sigma factor until released by regulated intramembrane proteolysis. The sequence is that of ECF RNA polymerase sigma factor SigM (sigM) from Mycobacterium tuberculosis (strain ATCC 35801 / TMC 107 / Erdman).